A 731-amino-acid polypeptide reads, in one-letter code: DNA topoisomerase 1 (731 aa).

A Toprim domain is found at 17–130 (KHLVIVESPA…KRIVFNEITP (114 aa)). Mg(2+) contacts are provided by glutamate 23 and aspartate 96. The Topo IA-type catalytic domain occupies 144-569 (DTAKVNAQKA…DFYPAFSEKV (426 aa)). The tract at residues 178-183 (SAGRVQ) is interaction with DNA. Tyrosine 312 (O-(5'-phospho-DNA)-tyrosine intermediate) is an active-site residue. C4-type zinc fingers lie at residues 591–617 (CSQC…FPEC), 628–657 (CPRP…FPVC), and 670–696 (CPQC…NPEC).

The protein belongs to the type IA topoisomerase family. In terms of assembly, monomer. Mg(2+) serves as cofactor.

It carries out the reaction ATP-independent breakage of single-stranded DNA, followed by passage and rejoining.. Its function is as follows. Releases the supercoiling and torsional tension of DNA, which is introduced during the DNA replication and transcription, by transiently cleaving and rejoining one strand of the DNA duplex. Introduces a single-strand break via transesterification at a target site in duplex DNA. The scissile phosphodiester is attacked by the catalytic tyrosine of the enzyme, resulting in the formation of a DNA-(5'-phosphotyrosyl)-enzyme intermediate and the expulsion of a 3'-OH DNA strand. The free DNA strand then undergoes passage around the unbroken strand, thus removing DNA supercoils. Finally, in the religation step, the DNA 3'-OH attacks the covalent intermediate to expel the active-site tyrosine and restore the DNA phosphodiester backbone. The chain is DNA topoisomerase 1 from Treponema pallidum (strain Nichols).